Consider the following 375-residue polypeptide: Probable dipeptidase PepE (375 aa).

Transmembrane regions (helical) follow at residues 15 to 35 and 55 to 75; these read LALA…ITPG and LVLP…LAAL. 5 residues coordinate Mn(2+): Asp230, Asp242, His306, Glu335, and Glu349.

It belongs to the peptidase M24B family. Requires Mn(2+) as cofactor.

It is found in the cell membrane. The protein is Probable dipeptidase PepE (pepE) of Mycobacterium bovis (strain ATCC BAA-935 / AF2122/97).